Here is a 160-residue protein sequence, read N- to C-terminus: Suppressyn (160 aa).

Positions 1 to 39 (MACIYPTTFYTSLPTKSLNMGISLTTILILSVAVLLSTA) are cleaved as a signal peptide. Positions 137–160 (AKASKPTTPPENRPRHFHSFIQKL) are disordered.

Interacts (secreted) with SLC1A5; mainly at cell surface. In terms of tissue distribution, specifically expressed in placenta by extravillous trophoblasts and syncytiotrophoblasts (at protein level).

It is found in the secreted. Its function is as follows. May play a role in trophoblasts syncytialization, the spontaneous fusion of their plasma membranes, an essential process in placental development. May negatively regulate cell-cell fusion by interacting with SLC1A5, the probable receptor on the cell surface of the fusogenic syncytin-1/ERVW-1. The polypeptide is Suppressyn (ERVH48-1) (Homo sapiens (Human)).